A 122-amino-acid polypeptide reads, in one-letter code: Large ribosomal subunit protein uL14 (122 aa).

It belongs to the universal ribosomal protein uL14 family. Part of the 50S ribosomal subunit. Forms a cluster with proteins L3 and L19. In the 70S ribosome, L14 and L19 interact and together make contacts with the 16S rRNA in bridges B5 and B8.

Its function is as follows. Binds to 23S rRNA. Forms part of two intersubunit bridges in the 70S ribosome. In Thermotoga maritima (strain ATCC 43589 / DSM 3109 / JCM 10099 / NBRC 100826 / MSB8), this protein is Large ribosomal subunit protein uL14.